Here is a 201-residue protein sequence, read N- to C-terminus: IMP cyclohydrolase (201 aa).

It belongs to the archaeal IMP cyclohydrolase family.

It carries out the reaction IMP + H2O = 5-formamido-1-(5-phospho-D-ribosyl)imidazole-4-carboxamide. It participates in purine metabolism; IMP biosynthesis via de novo pathway; IMP from 5-formamido-1-(5-phospho-D-ribosyl)imidazole-4-carboxamide: step 1/1. Catalyzes the cyclization of 5-formylamidoimidazole-4-carboxamide ribonucleotide to IMP. This chain is IMP cyclohydrolase, found in Methanococcus maripaludis (strain C5 / ATCC BAA-1333).